We begin with the raw amino-acid sequence, 895 residues long: Transcription factor SWI6 (895 aa).

Positions 1 to 45 (MASTVAGNSFVSQQHPGNLHSANLQSQSQGFRRQNSTSSVPSTAS) are enriched in polar residues. The tract at residues 1–107 (MASTVAGNSF…SDQNVPQQPQ (107 aa)) is disordered. The span at 64–100 (MSSQQSQPPASQQSFSMSQTGSQPQPSQSSFRSYSDQ) shows a compositional bias: low complexity. Residues 112–219 (IYTAVYSNVE…NRNPDGSVSQ (108 aa)) enclose the HTH APSES-type domain. Residues 143–164 (ATQILKVAGVEKGKRTKILEKE) constitute a DNA-binding region (H-T-H motif). 2 disordered regions span residues 272–293 (ARFDSPGPRGRNGPTRAPSFQR) and 323–358 (NMAFSAGSEPQPGGLNGTEPPRKRQRMDMTPANSFG). 2 ANK repeats span residues 458–488 (QCHTALHWAATLSRMTILRRLIEAGASPFRV) and 607–636 (AGDTALNIAARIGNRSIISQLLEVCASPHI). The interval 653 to 684 (SDGAMKTKGDSGGDVENGDVGGSSQKSNESSN) is disordered. Over residues 674-684 (GSSQKSNESSN) the composition is skewed to polar residues. Residues 698–759 (SANFQEEIKN…VTNLQRAEER (62 aa)) adopt a coiled-coil conformation.

The protein localises to the nucleus. Its function is as follows. Transcription factor that plays a role downstream of the MCK1-MKK2-MPS1 cascade. Required for hyphal morphogenesis and pathogenicity. Is an important oxidative stress response regulator and plays a positive role in the regulation of extracellular peroxidases. This chain is Transcription factor SWI6, found in Pyricularia oryzae (strain 70-15 / ATCC MYA-4617 / FGSC 8958) (Rice blast fungus).